We begin with the raw amino-acid sequence, 106 residues long: Cell division protein FtsB (106 aa).

Residues 1-3 (MGK) lie on the Cytoplasmic side of the membrane. The chain crosses the membrane as a helical span at residues 4-21 (LTLLLLVLLGWLQYSLWL). Residues 22 to 106 (GKNGIHDFVR…GTPSTQNNAQ (85 aa)) lie on the Periplasmic side of the membrane. Residues 31 to 62 (RVKEDVAAQEANNSTLKARNDQLFAEIDDLNG) adopt a coiled-coil conformation.

The protein belongs to the FtsB family. Part of a complex composed of FtsB, FtsL and FtsQ.

The protein resides in the cell inner membrane. Essential cell division protein. May link together the upstream cell division proteins, which are predominantly cytoplasmic, with the downstream cell division proteins, which are predominantly periplasmic. The sequence is that of Cell division protein FtsB from Yersinia pseudotuberculosis serotype O:1b (strain IP 31758).